The chain runs to 281 residues: MTWKIVSDSGCDFRELKDLALDTNFENVPLTIQVGQEIFIDNAELNIDLMMEKMYATSTASKSACPSPDDYLKAFAGADNIFVVTITGTLSGSHNSAQVAKKLYLEEHPNVNIHVIDSLSAGGEVDLLVQKLNQLISNGLSFDEIVQEITNYQSKTKLLFVLAKVDNLVKNGRLNKLIGAVVGLPNIRMVGEAGPQGTLELLQKARGYKKSLSAAFEEIIKAGYAGGEIIISHRNNDKFCQQFSDLVKEKFPNAQIQAIPTSGLCSFYAEEGGLLMGYEIG.

Positions 3-280 constitute a DegV domain; it reads WKIVSDSGCD…EGGLLMGYEI (278 aa). Positions 63 and 91 each coordinate hexadecanoate.

Functionally, may bind long-chain fatty acids, such as palmitate, and may play a role in lipid transport or fatty acid metabolism. The protein is DegV domain-containing protein of Streptococcus gordonii.